Consider the following 378-residue polypeptide: C-X-C chemokine receptor type 3-2 (378 aa).

Residues 1 to 47 (MDNSTTAAEVSAPTDYDYNSTSYDDDNPYAAPCSLTETWNFLGRFAP) are Extracellular-facing. Residues N3 and N19 are each glycosylated (N-linked (GlcNAc...) asparagine). Residues 48–68 (VAYILVFILALVGNILVLCVI) form a helical membrane-spanning segment. The Cytoplasmic portion of the chain corresponds to 69–86 (RRYRQSRHSPCSFSLTDT). Residues 87-107 (FLLHLAVSDLLLAATLPFFAV) traverse the membrane as a helical segment. Over 108 to 121 (EWISEWVFGKVMCK) the chain is Extracellular. Cysteines 120 and 199 form a disulfide. A helical transmembrane segment spans residues 122–142 (ITGALFSLNVYCGVLFLACIS). The Cytoplasmic portion of the chain corresponds to 143-164 (FDRYLAIVHAINISWRRKTCHA). The helical transmembrane segment at 165–185 (QLACAFIWVICLGLSMVDMHF) threads the bilayer. The Extracellular segment spans residues 186–212 (RDLVEIPGMNRMVCQIVYSEQYSKQWQ). Residues 213–233 (IGMQLVSMVLGFILPLLVMLY) traverse the membrane as a helical segment. The Cytoplasmic segment spans residues 234–253 (CYLHIFKALCHATRRQKRRS). A helical membrane pass occupies residues 254–274 (LRLIISLVIVFVISWAPYNAL). The Extracellular portion of the chain corresponds to 275–304 (RMTDSLQMLGVIVKSCALNNVLDVGILVTE). Residues 305-325 (SLGLAHCALNPLLYGLVGVKF) form a helical membrane-spanning segment. The Cytoplasmic segment spans residues 326 to 378 (RRELAQMCKAALGPQGCLGLVGWANGRGSSTRRPTGSFSSVETENTSYFSVMA).

The protein belongs to the G-protein coupled receptor 1 family.

Its subcellular location is the cell membrane. Its function is as follows. Receptor for the C-X-C chemokines cxcl11.1 and cxcl11.6. Promotes macrophage chemotaxis to sites of bacterial infection. The polypeptide is C-X-C chemokine receptor type 3-2 (Danio rerio (Zebrafish)).